A 336-amino-acid polypeptide reads, in one-letter code: MKVYYDQDADLSRITSRRVAIIGYGSQGHAHANNLKESGVNVVVGLRPGSSSAAKAQEAGLEVASVEEATQGADVVMMLVPDEAAPDIYNQQVAPNLKDGAAIAFAHGFNIHYGQIQPAADHDVIMIAPKGPGHTVRSTYVAGAGVPSLIAIEQDASGQAKEIALAYAVANGGGRSGIIETSFREETETDLFGEQTVLCGGIAALIEAGFETLVEAGYAPEMAYFECLHETKLIVDLLYEGGLANMRYSVSNTAEYGDFTRGPRVINEESREAMREILEEIQNGDFAKEYVLENKAGAPTLHARRRLAAEHPIEEVGERLRGMMPWIAANKLVDRD.

The KARI N-terminal Rossmann domain maps to M1–T181. Residues Y24 to Q27, R47, S50, and S52 each bind NADP(+). H107 is a catalytic residue. G133 is a binding site for NADP(+). The region spanning S182–I327 is the KARI C-terminal knotted domain. Residues D190, E194, E226, and E230 each contribute to the Mg(2+) site. S251 contacts substrate.

The protein belongs to the ketol-acid reductoisomerase family. It depends on Mg(2+) as a cofactor.

The catalysed reaction is (2R)-2,3-dihydroxy-3-methylbutanoate + NADP(+) = (2S)-2-acetolactate + NADPH + H(+). It catalyses the reaction (2R,3R)-2,3-dihydroxy-3-methylpentanoate + NADP(+) = (S)-2-ethyl-2-hydroxy-3-oxobutanoate + NADPH + H(+). It functions in the pathway amino-acid biosynthesis; L-isoleucine biosynthesis; L-isoleucine from 2-oxobutanoate: step 2/4. It participates in amino-acid biosynthesis; L-valine biosynthesis; L-valine from pyruvate: step 2/4. Functionally, involved in the biosynthesis of branched-chain amino acids (BCAA). Catalyzes an alkyl-migration followed by a ketol-acid reduction of (S)-2-acetolactate (S2AL) to yield (R)-2,3-dihydroxy-isovalerate. In the isomerase reaction, S2AL is rearranged via a Mg-dependent methyl migration to produce 3-hydroxy-3-methyl-2-ketobutyrate (HMKB). In the reductase reaction, this 2-ketoacid undergoes a metal-dependent reduction by NADPH to yield (R)-2,3-dihydroxy-isovalerate. This is Ketol-acid reductoisomerase (NADP(+)) from Halorhodospira halophila (strain DSM 244 / SL1) (Ectothiorhodospira halophila (strain DSM 244 / SL1)).